A 119-amino-acid chain; its full sequence is Large ribosomal subunit protein uL22 (119 aa).

It belongs to the universal ribosomal protein uL22 family. Part of the 50S ribosomal subunit.

Its function is as follows. This protein binds specifically to 23S rRNA; its binding is stimulated by other ribosomal proteins, e.g. L4, L17, and L20. It is important during the early stages of 50S assembly. It makes multiple contacts with different domains of the 23S rRNA in the assembled 50S subunit and ribosome. The globular domain of the protein is located near the polypeptide exit tunnel on the outside of the subunit, while an extended beta-hairpin is found that lines the wall of the exit tunnel in the center of the 70S ribosome. The sequence is that of Large ribosomal subunit protein uL22 from Rickettsia conorii (strain ATCC VR-613 / Malish 7).